Reading from the N-terminus, the 74-residue chain is Conotoxin TsMLCL-04 (74 aa).

An N-terminal signal peptide occupies residues 1–19; the sequence is MLCLPVFIILLLLASPAAP. The propeptide occupies 20-60; that stretch reads NPLETRIQRDLIRAALEDADMKTNERFLEGVISTIKDFAGK.

Belongs to the conotoxin T superfamily. In terms of processing, contains 2 disulfide bonds that can be either 'C1-C3, C2-C4' or 'C1-C4, C2-C3', since these disulfide connectivities have been observed for conotoxins with cysteine framework V (for examples, see AC P0DQQ7 and AC P81755). As to expression, expressed by the venom duct.

It localises to the secreted. This chain is Conotoxin TsMLCL-04, found in Conus tessulatus (Tessellate cone).